Consider the following 843-residue polypeptide: MPLSYQHFRRLLLLDNEAGPLEEELPRLADEDLNHRVAEDLNLQLPNVSIPWTHKVGNFTGLYSSTVPVFNPDWLTPSFPDIHLHQDLIQKCEQFVRPLTKNEVRRLKLIMPARFYPKATKYFPLDKGIKPYYPENVVNHYFKTTHYLHTLWKARILYKRESTHSASFCGSPYSWEQELQHGSTSLNGEKGHGTESLCAQSSGILSRPPVGSTIQSKFQQSRLGLQHKQGQLANGKQGRSGRLWSRVHTPTRWPSGVEPSGTGHSDNLATRSTSRFHQSEVRKETNPSLSTSKGHTSTGHAVELNTVPPSTVGSESQGSVFSCWWLQFRNTEPCSDYCLSHIINLLEDWGPCYEHGEHHIRTPRTPSRVTGGVFLVDKNPHNTTESRLVVDFSQFSRGTTRVSWPKFAVPNLQSLTNLLSSNLSWLSLDVSAAFYHLPLHPAAMPHLLVGSSGLSRYVARVSSTSRIYNHQHGTLQNLHHSCSRNLYVSLLLLYQTFGRKLHLYSHPIILGFRKIPMGVGLSPFLLAQFTSAICSVVRRAFPHCLAFSYMDDLVLGAKSVQHLESLYTAVTNFLLSVGIHLNTAKTKWWGYSLHFMGYIIGSWGTLPQEHIVQKIKNCFRKLPVNRPIDWKVCQRIVGLLGFAAPFTQCGYPALMPLYACITAKQAFVFSPTYKAFLCKQYMNLYPVARQRPGLCQVFADATPTGWGLAIGHQRMRGTFVAPLPIHTAELLAACFARSRSGADIIGTDNSVVLSRKYTSFPWLLGCAANWILRGTSFVYVPSALNPADDPSRGRLGLCRPLLRLPFRPTTGRTSLYADSPPVPFHQPARVHFGSPLHVAWRPP.

Residues 1-177 (MPLSYQHFRR…FCGSPYSWEQ (177 aa)) form a terminal protein domain (TP) region. The spacer stretch occupies residues 178 to 346 (ELQHGSTSLN…YCLSHIINLL (169 aa)). Positions 249–301 (TPTRWPSGVEPSGTGHSDNLATRSTSRFHQSEVRKETNPSLSTSKGHTSTGHA) are disordered. Composition is skewed to polar residues over residues 262-276 (TGHSDNLATRSTSRF) and 286-299 (NPSLSTSKGHTSTG). A polymerase/reverse transcriptase domain (RT) region spans residues 347 to 690 (EDWGPCYEHG…YMNLYPVARQ (344 aa)). Residues 357–600 (EHHIRTPRTP…YSLHFMGYII (244 aa)) enclose the Reverse transcriptase domain. Positions 429, 551, and 552 each coordinate Mg(2+).

It belongs to the hepadnaviridae P protein family.

It carries out the reaction DNA(n) + a 2'-deoxyribonucleoside 5'-triphosphate = DNA(n+1) + diphosphate. It catalyses the reaction Endonucleolytic cleavage to 5'-phosphomonoester.. Activated by host HSP70 and HSP40 in vitro to be able to bind the epsilon loop of the pgRNA. Because deletion of the RNase H region renders the protein partly chaperone-independent, the chaperones may be needed indirectly to relieve occlusion of the RNA-binding site by this domain. Inhibited by several reverse-transcriptase inhibitors: Lamivudine, Adefovir and Entecavir. Multifunctional enzyme that converts the viral RNA genome into dsDNA in viral cytoplasmic capsids. This enzyme displays a DNA polymerase activity that can copy either DNA or RNA templates, and a ribonuclease H (RNase H) activity that cleaves the RNA strand of RNA-DNA heteroduplexes in a partially processive 3'- to 5'-endonucleasic mode. Neo-synthesized pregenomic RNA (pgRNA) are encapsidated together with the P protein, and reverse-transcribed inside the nucleocapsid. Initiation of reverse-transcription occurs first by binding the epsilon loop on the pgRNA genome, and is initiated by protein priming, thereby the 5'-end of (-)DNA is covalently linked to P protein. Partial (+)DNA is synthesized from the (-)DNA template and generates the relaxed circular DNA (RC-DNA) genome. After budding and infection, the RC-DNA migrates in the nucleus, and is converted into a plasmid-like covalently closed circular DNA (cccDNA). The activity of P protein does not seem to be necessary for cccDNA generation, and is presumably released from (+)DNA by host nuclear DNA repair machinery. This Homo sapiens (Human) protein is Protein P.